The sequence spans 940 residues: Protein translocase subunit SecA (940 aa).

ATP is bound by residues Q86, 104–108 (GEGKT), and D494. A disordered region spans residues 884–940 (ATAKAQKDQQAEDAVLVGEDEPETPQGPPARGAFGQPTGASSAPQNREERRKADRRK). Residues 929–940 (NREERRKADRRK) are compositionally biased toward basic and acidic residues.

Belongs to the SecA family. In terms of assembly, monomer and homodimer. Part of the essential Sec protein translocation apparatus which comprises SecA, SecYEG and auxiliary proteins SecDF. Other proteins may also be involved.

It localises to the cell membrane. The protein localises to the cytoplasm. It carries out the reaction ATP + H2O + cellular proteinSide 1 = ADP + phosphate + cellular proteinSide 2.. In terms of biological role, part of the Sec protein translocase complex. Interacts with the SecYEG preprotein conducting channel. Has a central role in coupling the hydrolysis of ATP to the transfer of proteins into and across the cell membrane, serving as an ATP-driven molecular motor driving the stepwise translocation of polypeptide chains across the membrane. This chain is Protein translocase subunit SecA, found in Clavibacter sepedonicus (Clavibacter michiganensis subsp. sepedonicus).